Reading from the N-terminus, the 147-residue chain is Hemoglobin subunit delta (147 aa).

The region spanning 3-147 (HLTPDEKNAV…VATALAHKYH (145 aa)) is the Globin domain. S51 carries the post-translational modification Phosphoserine. Positions 64 and 93 each coordinate heme b.

It belongs to the globin family. Heterotetramer of two delta chains and two alpha chains. Red blood cells.

The protein is Hemoglobin subunit delta (HBD) of Otolemur crassicaudatus (Brown greater galago).